The chain runs to 140 residues: Nucleoside diphosphate kinase (140 aa).

The ATP site is built by Lys-11, Phe-59, Arg-87, Thr-93, Arg-104, and Asn-114. Catalysis depends on His-117, which acts as the Pros-phosphohistidine intermediate.

Belongs to the NDK family. It depends on Mg(2+) as a cofactor.

The protein localises to the cytoplasm. The enzyme catalyses a 2'-deoxyribonucleoside 5'-diphosphate + ATP = a 2'-deoxyribonucleoside 5'-triphosphate + ADP. The catalysed reaction is a ribonucleoside 5'-diphosphate + ATP = a ribonucleoside 5'-triphosphate + ADP. Functionally, major role in the synthesis of nucleoside triphosphates other than ATP. The ATP gamma phosphate is transferred to the NDP beta phosphate via a ping-pong mechanism, using a phosphorylated active-site intermediate. This Metallosphaera sedula (strain ATCC 51363 / DSM 5348 / JCM 9185 / NBRC 15509 / TH2) protein is Nucleoside diphosphate kinase.